The sequence spans 526 residues: Probable fucosyltransferase 7 (526 aa).

Over 1–4 (MKTK) the chain is Cytoplasmic. The chain crosses the membrane as a helical; Signal-anchor for type II membrane protein span at residues 5-25 (LMITIFSCLLLWSMLLLLSFS). Over 26-526 (NIFKHQLLGA…KLVDDTKNEL (501 aa)) the chain is Lumenal. N-linked (GlcNAc...) asparagine glycans are attached at residues asparagine 211, asparagine 215, and asparagine 363.

Belongs to the glycosyltransferase 37 family. Expressed in roots, leaves, stems and seedlings.

It localises to the golgi apparatus. The protein localises to the golgi stack membrane. The protein operates within protein modification; protein glycosylation. May be involved in cell wall biosynthesis. May act as a fucosyltransferase. The sequence is that of Probable fucosyltransferase 7 (FUT7) from Arabidopsis thaliana (Mouse-ear cress).